The primary structure comprises 667 residues: MGLRFQQLKKLWLLYLFLLFFAFFMFAISINLYVASIQGGDAEMRHPKPPPKRRSLWPHKNIVAHYIGKGDIFGNMTADDYNINLFQPINGEGADGRPVVVPPRDRFRMQRFFRLNSFNLLASDRIPLNRTLKDYRTPECRDKKYASGLPSTSVIIVFHNEAWSVLLRTITSVINRSPRHLLKEIILVDDASDRSYLKRQLESYVKVLAVPTRIFRMKKRSGLVPARLLGAENARGDVLTFLDAHCECSRGWLEPLLSRIKESRKVVICPVIDIISDDNFSYTKTFENHWGAFNWQLSFRWFSSDRKRQTAGNSSKDSTDPIATPGMAGGLFAIDRKYFYEMGSYDSNMRVWGGENVEMSFRIWQCGGRVEISPCSHVGHVFRSSTPYTFPGGMSEVLTDNLARAATVWMDDWQYFIMLYTSGLTLGAKDKVNVTERVALRERLQCKPFSWYLENIWPEHFFPAPDRFFGKIIWLDGETECAQAYSKHMKNLPGRALSREWKRAFEEIDSKAEELMALIDLERDKCLRPLKEDVPRSSLSAVTVGDCTSHAQSMDMFVITPKGQIMTNDNVCLTYRQQKLGVIKMLKNRNATTSNVMLAQCASDSSQLWTYDMDTQQISHRDTKLCLTLKAATNSRLQKVEKVVLSMECDFKDITQKWGFIPLPWRM.

Residues 1–12 (MGLRFQQLKKLW) are Cytoplasmic-facing. A helical; Signal-anchor for type II membrane protein membrane pass occupies residues 13 to 35 (LLYLFLLFFAFFMFAISINLYVA). Residues 36 to 667 (SIQGGDAEMR…WGFIPLPWRM (632 aa)) lie on the Lumenal side of the membrane. N75 and N129 each carry an N-linked (GlcNAc...) asparagine glycan. 5 disulfide bridges follow: C140/C375, C366/C446, C526/C547, C572/C601, and C626/C649. The interval 149–259 (LPSTSVIIVF…RGWLEPLLSR (111 aa)) is catalytic subdomain A. Residues D190 and R220 each coordinate substrate. Mn(2+)-binding residues include D243 and H245. N-linked (GlcNAc...) asparagine glycans are attached at residues N279 and N313. Residues 321–383 (PIATPGMAGG…PCSHVGHVFR (63 aa)) form a catalytic subdomain B region. W352 serves as a coordination point for substrate. Residue H380 participates in Mn(2+) binding. Residues R383 and Y388 each contribute to the substrate site. N433 carries an N-linked (GlcNAc...) asparagine glycan. In terms of domain architecture, Ricin B-type lectin spans 513 to 661 (EELMALIDLE…KDITQKWGFI (149 aa)). A glycan (N-linked (GlcNAc...) asparagine) is linked at N590.

It belongs to the glycosyltransferase 2 family. GalNAc-T subfamily. It depends on Mn(2+) as a cofactor. In terms of tissue distribution, expressed in developing oocytes and egg chambers. During embryonic stages 9-11, expressed in the primordiums of the foregut, midgut and hindgut. During embryonic stages 12-13, expression is found uniquely in the posterior spiracle. During embryonic stages 14-17, expressed in the pharynx, esophagus and posterior spiracles. Expression observed in the epidermis during embryonic stages 16-17. In third instar larvae, expressed ubiquitously in wing, with increased expression in pleura and notum, eye-antennal, leg and haltere imaginal disks.

Its subcellular location is the golgi apparatus membrane. The enzyme catalyses L-seryl-[protein] + UDP-N-acetyl-alpha-D-galactosamine = a 3-O-[N-acetyl-alpha-D-galactosaminyl]-L-seryl-[protein] + UDP + H(+). It catalyses the reaction L-threonyl-[protein] + UDP-N-acetyl-alpha-D-galactosamine = a 3-O-[N-acetyl-alpha-D-galactosaminyl]-L-threonyl-[protein] + UDP + H(+). Its pathway is protein modification; protein glycosylation. In terms of biological role, catalyzes the initial reaction in O-linked oligosaccharide biosynthesis, the transfer of an N-acetyl-D-galactosamine residue to a serine or threonine residue on the protein receptor. It can both act as a peptide transferase that transfers GalNAc onto unmodified peptide substrates, and as a glycopeptide transferase that requires the prior addition of a GalNAc on a peptide before adding additional GalNAc moieties. Prefers EA2 as substrate. Has weak activity toward Muc5AC-3, -13 and -3/13 substrates. Plays a critical role in the regulation of integrin-mediated cell adhesion during wing development by influencing, via glycosylation, the secretion and localization of the integrin ligand Tig to the basal cell layer interface. Might have a role in protein O-glycosylation in the Golgi and thereby in establishing and/or maintaining a proper secretory apparatus structure. Together with Pgant35A, regulates integrin levels and activity-dependent integrin signaling at the synapse in neurons and muscles. This Drosophila melanogaster (Fruit fly) protein is Polypeptide N-acetylgalactosaminyltransferase 3.